A 52-amino-acid polypeptide reads, in one-letter code: uncharacterized protein (52 aa).

This is an uncharacterized protein from Bacillus subtilis (strain 168).